We begin with the raw amino-acid sequence, 297 residues long: Indole-3-glycerol phosphate synthase (297 aa).

It belongs to the TrpC family.

The enzyme catalyses 1-(2-carboxyphenylamino)-1-deoxy-D-ribulose 5-phosphate + H(+) = (1S,2R)-1-C-(indol-3-yl)glycerol 3-phosphate + CO2 + H2O. Its pathway is amino-acid biosynthesis; L-tryptophan biosynthesis; L-tryptophan from chorismate: step 4/5. In Trichodesmium erythraeum (strain IMS101), this protein is Indole-3-glycerol phosphate synthase.